Consider the following 32-residue polypeptide: Putative leucine-rich repeat protein PS14 (32 aa).

The sequence is that of Putative leucine-rich repeat protein PS14 from Pinus strobus (Eastern white pine).